The chain runs to 311 residues: Ribosomal RNA small subunit methyltransferase H (311 aa).

S-adenosyl-L-methionine-binding positions include 32–34, D52, F79, D100, and Q107; that span reads AGH.

Belongs to the methyltransferase superfamily. RsmH family.

The protein resides in the cytoplasm. The catalysed reaction is cytidine(1402) in 16S rRNA + S-adenosyl-L-methionine = N(4)-methylcytidine(1402) in 16S rRNA + S-adenosyl-L-homocysteine + H(+). Functionally, specifically methylates the N4 position of cytidine in position 1402 (C1402) of 16S rRNA. This chain is Ribosomal RNA small subunit methyltransferase H, found in Staphylococcus aureus (strain bovine RF122 / ET3-1).